Consider the following 197-residue polypeptide: Nucleoside triphosphate pyrophosphatase (197 aa).

Residue Asp-71 is the Proton acceptor of the active site.

It belongs to the Maf family. The cofactor is a divalent metal cation.

It localises to the cytoplasm. It carries out the reaction a ribonucleoside 5'-triphosphate + H2O = a ribonucleoside 5'-phosphate + diphosphate + H(+). The enzyme catalyses a 2'-deoxyribonucleoside 5'-triphosphate + H2O = a 2'-deoxyribonucleoside 5'-phosphate + diphosphate + H(+). In terms of biological role, nucleoside triphosphate pyrophosphatase. May have a dual role in cell division arrest and in preventing the incorporation of modified nucleotides into cellular nucleic acids. This chain is Nucleoside triphosphate pyrophosphatase, found in Synechococcus sp. (strain JA-2-3B'a(2-13)) (Cyanobacteria bacterium Yellowstone B-Prime).